The chain runs to 61 residues: Metallothionein-2 (61 aa).

An N-acetylmethionine modification is found at Met1. A beta region spans residues Met1–Cys29. A divalent metal cation contacts are provided by Cys5, Cys7, Cys13, Cys15, Cys19, Cys21, Cys24, Cys26, Cys29, Cys33, Cys34, Cys36, Cys37, Cys41, Cys44, Cys48, Cys50, and Cys57. Residues Lys30 to Ala61 are alpha. A Phosphoserine modification is found at Ser58. Residues Cys59 and Cys60 each coordinate a divalent metal cation.

The protein belongs to the metallothionein superfamily. Type 1 family. Interacts with EOLA1.

Metallothioneins have a high content of cysteine residues that bind various heavy metals; these proteins are transcriptionally regulated by both heavy metals and glucocorticoids. The polypeptide is Metallothionein-2 (MT2A) (Ovis aries (Sheep)).